A 158-amino-acid polypeptide reads, in one-letter code: NAD(P)H-quinone oxidoreductase subunit J, chloroplastic (158 aa).

Belongs to the complex I 30 kDa subunit family. In terms of assembly, NDH is composed of at least 16 different subunits, 5 of which are encoded in the nucleus.

The protein resides in the plastid. Its subcellular location is the chloroplast thylakoid membrane. The catalysed reaction is a plastoquinone + NADH + (n+1) H(+)(in) = a plastoquinol + NAD(+) + n H(+)(out). It carries out the reaction a plastoquinone + NADPH + (n+1) H(+)(in) = a plastoquinol + NADP(+) + n H(+)(out). Its function is as follows. NDH shuttles electrons from NAD(P)H:plastoquinone, via FMN and iron-sulfur (Fe-S) centers, to quinones in the photosynthetic chain and possibly in a chloroplast respiratory chain. The immediate electron acceptor for the enzyme in this species is believed to be plastoquinone. Couples the redox reaction to proton translocation, and thus conserves the redox energy in a proton gradient. The polypeptide is NAD(P)H-quinone oxidoreductase subunit J, chloroplastic (Panax ginseng (Korean ginseng)).